The chain runs to 124 residues: Small ribosomal subunit protein uS12cz/uS12cy (124 aa).

The protein belongs to the universal ribosomal protein uS12 family. As to quaternary structure, part of the 30S ribosomal subunit.

It localises to the plastid. Its subcellular location is the chloroplast. With S4 and S5 plays an important role in translational accuracy. Located at the interface of the 30S and 50S subunits. The protein is Small ribosomal subunit protein uS12cz/uS12cy (rps12-A) of Zea mays (Maize).